Here is a 189-residue protein sequence, read N- to C-terminus: MASSIMALSSTAAVAAVAAPSKTGNSNVVSAFTGLKSMAQFPSSKTMSNAGAEWEQKTTSNGSRVRCMQVWPPYANKKFETLSYLPRLTPEQLVKEVEYLLKNKWVPCLEFEEDGEIKRVYGNSPGYYDGRYWVMWKLPMFGCTEASQVLNEVNECAKAYPNAFIRVIGFDNVRQVQCISFIVHKPEYN.

The N-terminal 66 residues, methionine 1–arginine 66, are a transit peptide targeting the chloroplast.

The protein belongs to the RuBisCO small chain family. As to quaternary structure, heterohexadecamer of 8 large and 8 small subunits.

It is found in the plastid. Its subcellular location is the chloroplast. Functionally, ruBisCO catalyzes two reactions: the carboxylation of D-ribulose 1,5-bisphosphate, the primary event in carbon dioxide fixation, as well as the oxidative fragmentation of the pentose substrate. Both reactions occur simultaneously and in competition at the same active site. Although the small subunit is not catalytic it is essential for maximal activity. In Larix laricina (Tamarack), this protein is Ribulose bisphosphate carboxylase small subunit, chloroplastic.